We begin with the raw amino-acid sequence, 331 residues long: Centriolar satellite-associated tubulin polyglutamylase complex regulator 1 (331 aa).

Residues 283–331 (PTSNNNSSSSALGQKEMSKKASPRKSLHQRKRIEMESDGSTEETDSSEN) are disordered. Positions 303–313 (ASPRKSLHQRK) are enriched in basic residues. Residues 318–331 (ESDGSTEETDSSEN) are compositionally biased toward acidic residues.

Belongs to the CSTPP1 family. As to quaternary structure, interacts with PCM1. Interacts with the complex TPGC. Binds to alpha-tubulin. In terms of tissue distribution, expression in elevated in ciliated tissues/organs, including brain, spinal cord, kidney, eyes, ears and lateral line.

The protein resides in the cytoplasm. It is found in the cytoskeleton. Its subcellular location is the microtubule organizing center. The protein localises to the centrosome. It localises to the centriolar satellite. Functionally, regulator of the tubulin polyglutamylase complex (TPGC) that controls cytoskeletal organization, nuclear shape, and cilium disassembly by balancing microtubule and actin assembly. Regulates the assembly and stability of the TPGC and thereby modulates polyglutamylation of the microtubule, which antagonizes MAP4 binding. This chain is Centriolar satellite-associated tubulin polyglutamylase complex regulator 1 (cstpp1), found in Danio rerio (Zebrafish).